The following is a 172-amino-acid chain: Transcriptional repressor NrdR (172 aa).

A zinc finger spans residues 3-34; the sequence is CPFCSYSDNRVLESRLAEEGESVRRRRECKQC. Residues 49-139 enclose the ATP-cone domain; sequence TVVIKRNGRR…VYRKFKGVAD (91 aa).

The protein belongs to the NrdR family. Requires Zn(2+) as cofactor.

Negatively regulates transcription of bacterial ribonucleotide reductase nrd genes and operons by binding to NrdR-boxes. In Gloeobacter violaceus (strain ATCC 29082 / PCC 7421), this protein is Transcriptional repressor NrdR.